The sequence spans 437 residues: Putrescine hydroxycinnamoyltransferase 3 (437 aa).

Residues His151 and Asp383 each act as proton acceptor in the active site.

The protein belongs to the plant acyltransferase family. As to expression, highly expressed in roots. Expressed at low levels in shoots and flowers.

In terms of biological role, hydroxycinnamoyl transferase that catalyzes the transfer of an acyl from p-coumaryol-CoA to putrescine, to produce coumaroyl putrescine. Can use feruloyl-CoA and caffeoyl-CoA as acyl donors. The sequence is that of Putrescine hydroxycinnamoyltransferase 3 from Oryza sativa subsp. japonica (Rice).